Reading from the N-terminus, the 390-residue chain is uncharacterized protein (390 aa).

A run of 12 helical transmembrane segments spans residues isoleucine 4 to leucine 24, glycine 40 to isoleucine 60, threonine 68 to proline 88, phenylalanine 98 to isoleucine 118, isoleucine 130 to alanine 150, phenylalanine 159 to isoleucine 179, valine 205 to glycine 225, valine 236 to isoleucine 256, glycine 273 to valine 293, alanine 295 to phenylalanine 315, leucine 329 to tyrosine 349, and glycine 356 to isoleucine 376.

Belongs to the major facilitator superfamily.

It is found in the cell membrane. This is an uncharacterized protein from Bacillus subtilis (strain 168).